Here is a 60-residue protein sequence, read N- to C-terminus: Large ribosomal subunit protein uL30 (60 aa).

This sequence belongs to the universal ribosomal protein uL30 family. Part of the 50S ribosomal subunit.

This Streptococcus pyogenes serotype M1 protein is Large ribosomal subunit protein uL30.